Reading from the N-terminus, the 327-residue chain is Quinone oxidoreductase 1 (327 aa).

NADP(+) is bound by residues 42–46 (FIDTY), Tyr-130, 152–153 (GV), 173–177 (GTAQK), Tyr-192, Ser-216, 238–241 (FGNS), 264–266 (PSL), and Arg-317.

It belongs to the zinc-containing alcohol dehydrogenase family. Quinone oxidoreductase subfamily. As to quaternary structure, homodimer.

The enzyme catalyses 2 a quinone + NADPH + H(+) = 2 a 1,4-benzosemiquinone + NADP(+). The sequence is that of Quinone oxidoreductase 1 (qorA) from Escherichia coli (strain K12).